We begin with the raw amino-acid sequence, 79 residues long: DNA gyrase inhibitor YacG (79 aa).

Zn(2+) contacts are provided by Cys-7, Cys-10, Cys-26, and Cys-30.

It belongs to the DNA gyrase inhibitor YacG family. Interacts with GyrB. Zn(2+) is required as a cofactor.

Functionally, inhibits all the catalytic activities of DNA gyrase by preventing its interaction with DNA. Acts by binding directly to the C-terminal domain of GyrB, which probably disrupts DNA binding by the gyrase. The protein is DNA gyrase inhibitor YacG of Shewanella halifaxensis (strain HAW-EB4).